Here is a 116-residue protein sequence, read N- to C-terminus: Putative iron-sulfur cluster insertion protein ErpA (116 aa).

Iron-sulfur cluster-binding residues include C44, C108, and C110.

It belongs to the HesB/IscA family. As to quaternary structure, homodimer. Iron-sulfur cluster is required as a cofactor.

Required for insertion of 4Fe-4S clusters. The protein is Putative iron-sulfur cluster insertion protein ErpA of Azoarcus sp. (strain BH72).